Consider the following 105-residue polypeptide: Replication restart protein PriB (105 aa).

One can recognise an SSB domain in the interval 1–102; the sequence is MTANRLVLTG…LHAEQIELID (102 aa).

This sequence belongs to the PriB family. In terms of assembly, homodimer. Interacts with PriA and DnaT. Component of the replication restart primosome. Primosome assembly occurs via a 'hand-off' mechanism. PriA binds to replication forks, subsequently PriB then DnaT bind; DnaT then displaces ssDNA to generate the helicase loading substrate.

Involved in the restart of stalled replication forks, which reloads the replicative helicase on sites other than the origin of replication; the PriA-PriB pathway is the major replication restart pathway. During primosome assembly it facilitates complex formation between PriA and DnaT on DNA; stabilizes PriA on DNA. Stimulates the DNA unwinding activity of PriA helicase. The protein is Replication restart protein PriB of Proteus mirabilis (strain HI4320).